A 404-amino-acid chain; its full sequence is Glutamate-pyruvate aminotransferase AlaA (404 aa).

Residues Gly-41 and Asn-179 each coordinate L-alanine. Lys-240 carries the N6-(pyridoxal phosphate)lysine modification. An L-alanine-binding site is contributed by Arg-378.

Belongs to the class-I pyridoxal-phosphate-dependent aminotransferase family. As to quaternary structure, homodimer. Requires pyridoxal 5'-phosphate as cofactor.

The catalysed reaction is L-alanine + 2-oxoglutarate = pyruvate + L-glutamate. It functions in the pathway amino-acid biosynthesis; L-alanine biosynthesis. Involved in the biosynthesis of alanine. Catalyzes the transamination of pyruvate by glutamate, leading to the formation of L-alanine and 2-oxoglutarate. Is also able to catalyze the reverse reaction. The sequence is that of Glutamate-pyruvate aminotransferase AlaA (alaA) from Haemophilus influenzae (strain ATCC 51907 / DSM 11121 / KW20 / Rd).